A 529-amino-acid chain; its full sequence is Peptide chain release factor 3 (529 aa).

In terms of domain architecture, tr-type G spans 11-280 (AKRRTFAIIS…GLVEWAPAPM (270 aa)). Residues 20–27 (SHPDAGKT), 88–92 (DTPGH), and 142–145 (NKLD) contribute to the GTP site.

It belongs to the TRAFAC class translation factor GTPase superfamily. Classic translation factor GTPase family. PrfC subfamily.

It localises to the cytoplasm. Its function is as follows. Increases the formation of ribosomal termination complexes and stimulates activities of RF-1 and RF-2. It binds guanine nucleotides and has strong preference for UGA stop codons. It may interact directly with the ribosome. The stimulation of RF-1 and RF-2 is significantly reduced by GTP and GDP, but not by GMP. This chain is Peptide chain release factor 3, found in Shigella flexneri.